The primary structure comprises 435 residues: Diaminobutyrate--2-oxoglutarate transaminase (435 aa).

At lysine 266 the chain carries N6-(pyridoxal phosphate)lysine.

This sequence belongs to the class-III pyridoxal-phosphate-dependent aminotransferase family. It depends on pyridoxal 5'-phosphate as a cofactor.

The catalysed reaction is L-2,4-diaminobutanoate + 2-oxoglutarate = L-aspartate 4-semialdehyde + L-glutamate. It participates in amine and polyamine biosynthesis; ectoine biosynthesis; L-ectoine from L-aspartate 4-semialdehyde: step 1/3. Functionally, catalyzes reversively the conversion of L-aspartate beta-semialdehyde (ASA) to L-2,4-diaminobutyrate (DABA) by transamination with L-glutamate. The protein is Diaminobutyrate--2-oxoglutarate transaminase (ectB) of Bordetella bronchiseptica (strain ATCC BAA-588 / NCTC 13252 / RB50) (Alcaligenes bronchisepticus).